The chain runs to 116 residues: Large ribosomal subunit protein uL23 (116 aa).

Belongs to the universal ribosomal protein uL23 family. Part of the 50S ribosomal subunit. Contacts protein L29, and trigger factor when it is bound to the ribosome.

In terms of biological role, one of the early assembly proteins it binds 23S rRNA. One of the proteins that surrounds the polypeptide exit tunnel on the outside of the ribosome. Forms the main docking site for trigger factor binding to the ribosome. The chain is Large ribosomal subunit protein uL23 from Psychrobacter arcticus (strain DSM 17307 / VKM B-2377 / 273-4).